Here is a 191-residue protein sequence, read N- to C-terminus: Cytochrome c oxidase assembly protein CtaG (191 aa).

The Cytoplasmic segment spans residues 1–9 (MSLSPHQKT). The helical; Signal-anchor for type II membrane protein transmembrane segment at 10–30 (AGGLVLVVAVMGAASFAAVPF) threads the bilayer. At 31–191 (YNWFCRVTGF…LAAESATDVN (161 aa)) the chain is on the periplasmic side.

It belongs to the COX11/CtaG family.

The protein localises to the cell inner membrane. In terms of biological role, exerts its effect at some terminal stage of cytochrome c oxidase synthesis, probably by being involved in the insertion of the copper B into subunit I. The polypeptide is Cytochrome c oxidase assembly protein CtaG (Cereibacter sphaeroides (strain ATCC 17029 / ATH 2.4.9) (Rhodobacter sphaeroides)).